The chain runs to 1110 residues: MAKFYYSDRRLACWAAGKNPHLGGSIESWLAAIKSDSSFRQTVKEDVQVNRLQPTAVRMFSWKVGSGPIDNPEKCNWHYVLTGEVPAQPTEPVKAREVVVPPVKVIPSPPPVPRPYFRPVGAFAPTRSGFIRATVERLSRKREESRAAALFAELPLEYPQGAPLVVPRGFAAMRWTYHATWRRWYDASDERALRVHPGGPALPPPPPPPPIQKPPSFEERLQAALERQSCARAFALETSLGLNMAWLGTAAIPSTSVCCADGRTTGGQTIAQEADPINHRVTSNTAPGRAQWISERRSALRRREQANSLQSLAAQTDMTFEQARNAYLGAADMVEQGLPLLPPLRNAYAPRGLWRGPSTRANYTLDFRLNGIPTGQNTLEILYNPVADEEMDEYRDRGMSAVVIDALEIAINPFGMPGNPTDLTVVATYGHERNMERAFIGSSSTFLGNGLARAIFFPGLQYSQEEPRRESIIRLYVASTNATVDADSILAAISVGTLRQHIGSLHNRTVASSVHAAQVQGTTLRATMMGNAVVVSPEGSLVTGTPEANVQIGSGSSMRMVGPLAWENVEEPGQTFTIRNRSRSMRVDRNADVGVALPRMSTTTRGLAGRGSVQVPKDCQAGRYLKTLDLRDMVSGFSGIQYEKWITAGLVMPDFKVVIRYPANAFTGITWVMSFDAYNRITSSITTTASPAYTLSVPHWLLHHKNGTTSCDIDYGELCGHAMWFNATTFESPKLHFTCLTGNNKELAADWEFVVELYAEFEAAKTFLGRPNFVYSADAFNGSFKFLTIPPLEYDLSTTSAYKSVSLLLGQTLIDGTHKVYNYNNTLLSYYLGIGGVVKGRVHICSPCTYGIVLRVVSEWNGVTNNWNQLFKYPGCYIGEDGNFEIEIRSPYHRTPLRLLDAQAASAFTSTLNFYAISGPIAPSGETAKMPVVVQIDEIALPDLSVPSFPNDYFLWVDFSAFTVDAEEYVIGSRFFDISSTTSTVHLGDNPFAHMIACHGLHHGILDLKLMWDLEGEFGKSSGGVTITKLCGDKATGMDGASRVCALQNMGCETELYIGNFAGANPNSALSLYSRWLAIKLDKARSMKMLRILCKPRGNFEFYGRTCFRV.

Residues 195 to 215 (VHPGGPALPPPPPPPPIQKPP) are disordered. Positions 200–213 (PALPPPPPPPPIQK) are enriched in pro residues.

It belongs to the nepoviruses RNA2 polyprotein family. In terms of processing, specific enzymatic cleavages in vivo by the P1 encoded 3C-like protease yield mature proteins.

The protein localises to the host cell junction. It localises to the host plasmodesma. Its subcellular location is the virion. In terms of biological role, implicated in RNA2 replication. Could also be required for nematode transmission of the virus. Functionally, transports viral genome to neighboring plant cells directly through plasmosdesmata, without any budding. The movement protein allows efficient cell to cell propagation, by bypassing the host cell wall barrier. Acts by forming a tubular structure at the host plasmodesmata, enlarging it enough to allow free passage of virion capsids. This Arabis mosaic virus (isolate NW) (ArMV) protein is RNA2 polyprotein.